A 303-amino-acid polypeptide reads, in one-letter code: Phytochrome-associated serine/threonine-protein phosphatase 1 (303 aa).

Residues Asp50, His52, Asp78, and Asn110 each coordinate Zn(2+). His111 functions as the Proton donor in the catalytic mechanism. Residues His160 and His234 each contribute to the Zn(2+) site.

It belongs to the PPP phosphatase family. PP-6 (PP-V) subfamily. As to quaternary structure, interacts with PHYA and PHYB, mostly when they are phosphorylated and in Pfr forms. Interacts with TAP46. Interacts with PIN1 and PIN2. Interacts with ABI5. Interacts with PIF3 and PIF4. Protein phosphatase 6 (PP6) holoenzyme is a heterotrimeric complex formed by the catalytic subunit FYPP, a SAPS domain-containing subunit (SAL) and a protein phosphatase 2A regulatory subunit A (PP2AA). Zn(2+) is required as a cofactor. In terms of tissue distribution, mostly expressed in flowers. Also detected to a lower extent in stems and leaves. Expressed in roots.

It localises to the cytoplasm. The catalysed reaction is O-phospho-L-seryl-[protein] + H2O = L-seryl-[protein] + phosphate. It catalyses the reaction O-phospho-L-threonyl-[protein] + H2O = L-threonyl-[protein] + phosphate. Catalytic subunit of protein phosphatase 6 (PP6). Dephosphorylates phosphorylated phytochromes, with a preference toward Pfr forms. Plays a major role in the photoperiodic control of flowering time in long days by modulating phytochrome signals in flowering time control. Involved in the regulation of polar auxin transport in roots. Dephosphorylates directly the auxin efflux carriers PIN1 and PIN2, thus promoting their proper polar localization in root cell plasma membrane. Acts antagonistically with the protein kinase PID to regulate the reversible phosphorylation of PIN and polar targeting, subsequently impacting polar auxin transport and plant development. Involved in the regulation of abscisic acid (ABA) signaling during seed germination and postgermination seedling growth. Functions as a negative regulator of ABA signaling through direct dephosphorylation and destabilization of ABI5. Acts antagonistically with the protein kinase SRK2E/SNRK2.6 to regulate ABI5 phosphorylation and ABA responses. Involved in the regulation of phosphorylation status in hypocotyl phototropism. Involved in the negative regulation of photomorphogenesis by controlling the stability and transcriptional activity of PIF3 and PIF4 proteins in the dark, via the regulation of their phosphorylation status. In Arabidopsis thaliana (Mouse-ear cress), this protein is Phytochrome-associated serine/threonine-protein phosphatase 1.